The primary structure comprises 644 residues: Zinc finger protein 74 (644 aa).

The KRAB domain maps to 43 to 114 (VSFKDVAVDF…QREVPRGPCP (72 aa)). 12 consecutive C2H2-type zinc fingers follow at residues 248–270 (FVCG…RRWH), 276–298 (YKCD…RRIH), 304–326 (FFCG…QRIH), 332–354 (YKCS…LRVH), 360–382 (YRCG…HRIH), 388–410 (YQCG…EKIH), 416–438 (FKCS…QRTH), 444–466 (FKCA…RRIH), 472–494 (FKCN…RRIH), 500–522 (FDCS…QRIH), 528–550 (YKCS…QKIH), and 556–578 (FKCE…QRLH). Lysine 582 is covalently cross-linked (Glycyl lysine isopeptide (Lys-Gly) (interchain with G-Cter in SUMO2)).

The protein belongs to the krueppel C2H2-type zinc-finger protein family. In terms of tissue distribution, highly expressed in the fetal brain.

The protein localises to the nucleus. Its function is as follows. May play a role in RNA metabolism. The sequence is that of Zinc finger protein 74 (ZNF74) from Homo sapiens (Human).